A 295-amino-acid chain; its full sequence is AP-1-like transcription factor YAP4 (295 aa).

3 positions are modified to phosphoserine: S85, S89, and S196. Positions A181 to P202 are enriched in polar residues. The tract at residues A181–E205 is disordered. A bZIP domain is found at P237–E295. Residues R239–K260 are basic motif. The tract at residues I262–L271 is leucine-zipper.

The protein belongs to the bZIP family. YAP subfamily. In terms of assembly, homodimer.

It is found in the cytoplasm. Its subcellular location is the nucleus. Its function is as follows. Transcription activator involved in the regulation of genes expressed in response to environmental changes and metabolic requirements. According to genome-wide promoter binding and gene expression studies it regulates, among others, genes involved in ribosome biogenesis, and protein synthesis. It may also be involved in pleiotropic drug resistance. When overexpressed it confers increased resistance to cisplatin, the DNA-alkylating agents methylmethanosulfonate, and mitomycin C, the antimalarial drugs quinidine, mefloquine, and chloroquine, and increases cellular tolerance to sodium and lithium. Preferentially binds 5'-TTACTAA-3'. The sequence is that of AP-1-like transcription factor YAP4 (CIN5) from Saccharomyces cerevisiae (strain ATCC 204508 / S288c) (Baker's yeast).